Reading from the N-terminus, the 39-residue chain is MELLAALNLEPIFQLTFVGLIMVAGPVVIFLLAFRGGDL.

Residues 12-32 form a helical membrane-spanning segment; sequence IFQLTFVGLIMVAGPVVIFLL.

It belongs to the Psb30/Ycf12 family. In terms of assembly, PSII is composed of 1 copy each of membrane proteins PsbA, PsbB, PsbC, PsbD, PsbE, PsbF, PsbH, PsbI, PsbJ, PsbK, PsbL, PsbM, PsbT, PsbX, PsbY, PsbZ, Psb30/Ycf12, peripheral proteins PsbO, CyanoQ (PsbQ), PsbU, PsbV and a large number of cofactors. It forms dimeric complexes.

It localises to the cellular thylakoid membrane. Its function is as follows. A core subunit of photosystem II (PSII), probably helps stabilize the reaction center. The sequence is that of Photosystem II reaction center protein Psb30 from Rippkaea orientalis (strain PCC 8801 / RF-1) (Cyanothece sp. (strain PCC 8801)).